Reading from the N-terminus, the 92-residue chain is Small ribosomal subunit protein uS19 (92 aa).

It belongs to the universal ribosomal protein uS19 family.

Its function is as follows. Protein S19 forms a complex with S13 that binds strongly to the 16S ribosomal RNA. In Clostridium botulinum (strain Eklund 17B / Type B), this protein is Small ribosomal subunit protein uS19.